We begin with the raw amino-acid sequence, 154 residues long: Small ribosomal subunit protein uS19 (154 aa).

This sequence belongs to the universal ribosomal protein uS19 family.

This chain is Small ribosomal subunit protein uS19 (RPS15), found in Oryza sativa subsp. japonica (Rice).